The primary structure comprises 420 residues: Tyrosine--tRNA ligase (420 aa).

Y39 contacts L-tyrosine. Residues 44–53 (CTAPSLHIGS) carry the 'HIGH' region motif. Positions 176 and 180 each coordinate L-tyrosine. Residues 236 to 240 (KMGKT) carry the 'KMSKS' region motif. Position 239 (K239) interacts with ATP. Positions 349 to 414 (IPLIDLLYDT…AGKKRHIKIL (66 aa)) constitute an S4 RNA-binding domain.

The protein belongs to the class-I aminoacyl-tRNA synthetase family. TyrS type 1 subfamily. As to quaternary structure, homodimer.

It is found in the cytoplasm. The enzyme catalyses tRNA(Tyr) + L-tyrosine + ATP = L-tyrosyl-tRNA(Tyr) + AMP + diphosphate + H(+). Functionally, catalyzes the attachment of tyrosine to tRNA(Tyr) in a two-step reaction: tyrosine is first activated by ATP to form Tyr-AMP and then transferred to the acceptor end of tRNA(Tyr). The sequence is that of Tyrosine--tRNA ligase from Wolbachia pipientis subsp. Culex pipiens (strain wPip).